The sequence spans 141 residues: Hemoglobin subunit alpha (141 aa).

One can recognise a Globin domain in the interval 1 to 141; it reads VLSGTDKTNV…VGLVLTAKYR (141 aa). His-58 is a binding site for O2. His-87 contacts heme b.

It belongs to the globin family. Heterotetramer of two alpha chains and two beta chains. As to expression, red blood cells.

In terms of biological role, involved in oxygen transport from the lung to the various peripheral tissues. The sequence is that of Hemoglobin subunit alpha (HBA) from Psittacula krameri (Rose-ringed parakeet).